Here is a 441-residue protein sequence, read N- to C-terminus: Probable magnesium transporter NIPA8 (441 aa).

Residues 1–4 (MGEW) lie on the Extracellular side of the membrane. The chain crosses the membrane as a helical span at residues 5–25 (VIGAFINIFGSVAINFGTNLL). Residues 26–56 (KLGHNERERLALQDGGGKMPLKPIIHNQTWR) lie on the Cytoplasmic side of the membrane. A helical membrane pass occupies residues 57–77 (VGILVFLLGNCLNFISFGYAA). The Extracellular segment spans residues 78-79 (QS). The chain crosses the membrane as a helical span at residues 80–100 (LLAALGSIQFVSNIAFAYVVL). Topologically, residues 101–105 (NKMVT) are cytoplasmic. Residues 106–126 (VKVLVATAFIVLGNVFLVAFG) form a helical membrane-spanning segment. The Extracellular segment spans residues 127–144 (NHQSPVFTPEQLAEKYSN). Residues 145 to 165 (VTFLVYCGILILIVAVHHFLY) traverse the membrane as a helical segment. Topologically, residues 166–184 (RKGEVLISTPGQEISSYWK) are cytoplasmic. A helical membrane pass occupies residues 185 to 205 (MLLPFSYAVVSGAIGSCSVLF). The Extracellular portion of the chain corresponds to 206–222 (AKSLSNLLRLAMSSSYQ). A helical transmembrane segment spans residues 223–243 (LHSWFTYSMLLLFLSTAGFWM). Over 244–255 (TRLNEGLSLYDA) the chain is Cytoplasmic. The chain crosses the membrane as a helical span at residues 256-276 (ILIVPMFQIAWTFFSICTGCI). At 277–288 (YFQEFQVFDALR) the chain is on the extracellular side. The helical transmembrane segment at 289–309 (TTMFILGMMCVFIGISLLAPD) threads the bilayer. Over 310-441 (DTRGNETKDN…MLEKTISSKA (132 aa)) the chain is Cytoplasmic. The interval 313 to 347 (GNETKDNSSSLDSIVSSSVPTEEDRLIPQSSEDGH) is disordered. The span at 320–330 (SSSLDSIVSSS) shows a compositional bias: low complexity. The segment covering 334–347 (EEDRLIPQSSEDGH) has biased composition (basic and acidic residues).

Belongs to the NIPA (TC 2.A.7) family. In terms of assembly, homodimer.

Its subcellular location is the cell membrane. The protein localises to the early endosome. Acts as a Mg(2+) transporter. Can also transport other divalent cations such as Fe(2+), Sr(2+), Ba(2+), Mn(2+) and Co(2+) but to a much less extent than Mg(2+). The chain is Probable magnesium transporter NIPA8 from Arabidopsis thaliana (Mouse-ear cress).